An 843-amino-acid polypeptide reads, in one-letter code: Protein kintoun (843 aa).

Disordered regions lie at residues 212–242, 371–417, 545–672, and 761–843; these read PTAE…VHPM, FSRE…PVHS, YTVK…GASQ, and KKNQ…DDVM. Serine 376 carries the post-translational modification Phosphoserine. The segment covering 387-397 has biased composition (acidic residues); it reads PVEEEEADADL. Residues 564-573 show a composition bias toward basic and acidic residues; that stretch reads VKFDHNKESL. Acidic residues predominate over residues 584–593; it reads TEEDEVEEQH. The span at 605-619 shows a compositional bias: basic residues; it reads QNKKPSKKQRKRNKK. A compositionally biased stretch (polar residues) spans 658 to 671; that stretch reads YSECNDSSVGSGAS. The segment covering 761-775 has biased composition (basic residues); sequence KKNQKRRDLKLRAQQ. A Phosphoserine modification is found at serine 779.

Belongs to the PIH1 family. Kintoun subfamily. In terms of assembly, interacts with Pp1alpha-96A, Pp1-87B, Pp1-13C and flw.

It is found in the cytoplasm. Functionally, required for cytoplasmic pre-assembly of axonemal dyneins, thereby playing a central role in motility in cilia and flagella. Involved in pre-assembly of dynein arm complexes in the cytoplasm before intraflagellar transport loads them for the ciliary compartment. The sequence is that of Protein kintoun from Drosophila ananassae (Fruit fly).